The chain runs to 310 residues: Regulator of microtubule dynamics protein 1 (310 aa).

Lys165 carries the N6-succinyllysine modification. 2 TPR repeats span residues 168–204 and 222–258; these read AICI…NPKD and PWYQ…DPNF.

This sequence belongs to the RMDN family. Interacts with microtubules.

The protein resides in the cytoplasm. It localises to the cytoskeleton. It is found in the spindle. The protein localises to the spindle pole. The polypeptide is Regulator of microtubule dynamics protein 1 (Rmdn1) (Rattus norvegicus (Rat)).